The following is a 480-amino-acid chain: Trigger factor (480 aa).

The region spanning glycine 161–proline 249 is the PPIase FKBP-type domain. Residues threonine 426–aspartate 480 are disordered. The segment covering proline 429–aspartate 480 has biased composition (basic and acidic residues).

The protein belongs to the FKBP-type PPIase family. Tig subfamily.

It localises to the cytoplasm. The catalysed reaction is [protein]-peptidylproline (omega=180) = [protein]-peptidylproline (omega=0). Functionally, involved in protein export. Acts as a chaperone by maintaining the newly synthesized protein in an open conformation. Functions as a peptidyl-prolyl cis-trans isomerase. The protein is Trigger factor of Rhodopirellula baltica (strain DSM 10527 / NCIMB 13988 / SH1).